Here is a 1427-residue protein sequence, read N- to C-terminus: Double-stranded DNA deaminase toxin A (1427 aa).

A run of 2 helical transmembrane segments spans residues 16–36 (ALAGFLVGAVLGIALIAAVAF) and 43–63 (FGVALLAGMMAGIGAQALLSI). YD repeat units lie at residues 469–501 (RVVETHTSEGENWTFEYDVAGRQTRVRHADGRT), 548–584 (YDDAGRIIAETDPLGRTTRTRYDGNSLRPVEVVGPDG), 720–747 (NARGQLIEAVDPAGRRVQYRYDVEGRLR), and 977–1008 (YDGAGDLIETSDSLRGSTRFSYDPAGRLISRA). Residues 1264-1427 (IGLNGGANVY…SPKSPTKGGC (164 aa)) are C-terminal effector domain, has cytidine deaminase activity. Residues histidine 1345, cysteine 1373, and cysteine 1376 each coordinate Zn(2+). Positions 1402–1427 (KRGATGETKVFTGNSNSPKSPTKGGC) are disordered. The span at 1412 to 1421 (FTGNSNSPKS) shows a compositional bias: polar residues.

This sequence belongs to the RHS/WapA nuclease family. As to quaternary structure, the toxic domain forms a 1:1 complex with the DddI immunity protein.

It localises to the membrane. The enzyme catalyses a 2'-deoxycytidine in double-stranded DNA + H2O + H(+) = a 2'-deoxyuridine in double-stranded DNA + NH4(+). Toxic component of a toxin-immunity protein module, which functions as a cellular contact-dependent growth inhibition (CDI) system. CDI modules allow bacteria to communicate with and inhibit the growth of closely related neighboring bacteria in a contact-dependent fashion. Bacteria that have this module inhibit or kill bacteria without it, giving them a growth advantage. Probably specifically inhibited by cognate immunity protein DddI. The C-terminal 163 residue fragment has double-stranded DNA cytidine deaminase activity; it does not deaminate ssDNA, ssRNA or dsRNA. Leads to C:G to T:A conversions in deaminated DNA. Preferentially deaminates 5'-TC-3' substrates. The sequence is that of Double-stranded DNA deaminase toxin A from Burkholderia cenocepacia (strain H111).